The chain runs to 103 residues: Pyrimidine/purine nucleoside phosphorylase (103 aa).

Belongs to the nucleoside phosphorylase PpnP family.

The enzyme catalyses a purine D-ribonucleoside + phosphate = a purine nucleobase + alpha-D-ribose 1-phosphate. The catalysed reaction is adenosine + phosphate = alpha-D-ribose 1-phosphate + adenine. It carries out the reaction cytidine + phosphate = cytosine + alpha-D-ribose 1-phosphate. It catalyses the reaction guanosine + phosphate = alpha-D-ribose 1-phosphate + guanine. The enzyme catalyses inosine + phosphate = alpha-D-ribose 1-phosphate + hypoxanthine. The catalysed reaction is thymidine + phosphate = 2-deoxy-alpha-D-ribose 1-phosphate + thymine. It carries out the reaction uridine + phosphate = alpha-D-ribose 1-phosphate + uracil. It catalyses the reaction xanthosine + phosphate = alpha-D-ribose 1-phosphate + xanthine. Its function is as follows. Catalyzes the phosphorolysis of diverse nucleosides, yielding D-ribose 1-phosphate and the respective free bases. Can use uridine, adenosine, guanosine, cytidine, thymidine, inosine and xanthosine as substrates. Also catalyzes the reverse reactions. In Dechloromonas aromatica (strain RCB), this protein is Pyrimidine/purine nucleoside phosphorylase.